We begin with the raw amino-acid sequence, 82 residues long: Hydrogenase maturation factor HybG (82 aa).

This sequence belongs to the HupF/HypC family.

It functions in the pathway protein modification; [NiFe] hydrogenase maturation. Functionally, involved in the maturation of [NiFe] hydrogenases. Involved in the biosynthesis of the Fe(CN)(2)CO cofactor. HybG delivers iron-bound CO(2) to HypD where reduction to CO probably occurs. In complex with HypD, accepts the cyanide ligand generated by HypF and HypE, and also coordinates the carbon monoxide ligand. The chain is Hydrogenase maturation factor HybG (hybG) from Escherichia coli O157:H7.